Here is a 429-residue protein sequence, read N- to C-terminus: Glucose-1-phosphate adenylyltransferase (429 aa).

Alpha-D-glucose 1-phosphate is bound by residues Gly-162, Glu-177–Lys-178, and Ser-209.

The protein belongs to the bacterial/plant glucose-1-phosphate adenylyltransferase family. Homotetramer.

It catalyses the reaction alpha-D-glucose 1-phosphate + ATP + H(+) = ADP-alpha-D-glucose + diphosphate. Its pathway is glycan biosynthesis; glycogen biosynthesis. Functionally, involved in the biosynthesis of ADP-glucose, a building block required for the elongation reactions to produce glycogen. Catalyzes the reaction between ATP and alpha-D-glucose 1-phosphate (G1P) to produce pyrophosphate and ADP-Glc. The chain is Glucose-1-phosphate adenylyltransferase from Nostoc punctiforme (strain ATCC 29133 / PCC 73102).